Reading from the N-terminus, the 404-residue chain is Activity-regulated cytoskeleton-associated protein (404 aa).

Residues 51–78 are a coiled coil; that stretch reads EVSKQVERELKGLQKSVGKLENNLEDHV. Residues 351 to 404 form a disordered region; it reads VQGNMDHSEEPSPQRTPEIQSGDSVESMPPSTTASPVPSNGTQPEPPSPPATVI. The span at 363 to 393 shows a compositional bias: polar residues; the sequence is PQRTPEIQSGDSVESMPPSTTASPVPSNGTQ. The segment covering 394–404 has biased composition (pro residues); sequence PEPPSPPATVI.

This sequence belongs to the ARC/ARG3.1 family. As to quaternary structure, homooligomer; homooligomerizes into virion-like capsids. Palmitoylation anchors the protein into the membrane by allowing direct insertion into the hydrophobic core of the lipid bilayer. In terms of tissue distribution, expressed at various levels throughout the brain.

The protein resides in the extracellular vesicle membrane. It is found in the postsynaptic cell membrane. Its subcellular location is the synapse. It localises to the postsynaptic density. The protein localises to the early endosome membrane. The protein resides in the cell projection. It is found in the dendrite. Its subcellular location is the cytoplasm. It localises to the cytoskeleton. The protein localises to the cell cortex. The protein resides in the dendritic spine. Master regulator of synaptic plasticity that self-assembles into virion-like capsids that encapsulate RNAs and mediate intercellular RNA transfer in the nervous system. ARC protein is released from neurons in extracellular vesicles that mediate the transfer of ARC mRNA into new target cells, where ARC mRNA can undergo activity-dependent translation. ARC capsids are endocytosed and are able to transfer ARC mRNA into the cytoplasm of neurons. Acts as a key regulator of synaptic plasticity: required for protein synthesis-dependent forms of long-term potentiation (LTP) and depression (LTD) and for the formation of long-term memory. Regulates synaptic plasticity by promoting endocytosis of AMPA receptors (AMPARs) in response to synaptic activity: this endocytic pathway maintains levels of surface AMPARs in response to chronic changes in neuronal activity through synaptic scaling, thereby contributing to neuronal homeostasis. Acts as a postsynaptic mediator of activity-dependent synapse elimination in the developing cerebellum by mediating elimination of surplus climbing fiber synapses. Accumulates at weaker synapses, probably to prevent their undesired enhancement. This suggests that ARC-containing virion-like capsids may be required to eliminate synaptic material. The protein is Activity-regulated cytoskeleton-associated protein of Gallus gallus (Chicken).